Reading from the N-terminus, the 283-residue chain is uncharacterized protein (283 aa).

Helical transmembrane passes span 18–38 (VYDI…AKLI), 61–81 (VIYF…LGLD), and 94–114 (IVLG…IFLI).

Belongs to the MscS (TC 1.A.23) family.

The protein localises to the cell membrane. This is an uncharacterized protein from Archaeoglobus fulgidus (strain ATCC 49558 / DSM 4304 / JCM 9628 / NBRC 100126 / VC-16).